A 98-amino-acid polypeptide reads, in one-letter code: NADH-ubiquinone oxidoreductase chain 4L (98 aa).

A run of 2 helical transmembrane segments spans residues 29–49 (SLLC…LLIL) and 61–81 (ILLL…LVTV).

It belongs to the complex I subunit 4L family. As to quaternary structure, core subunit of respiratory chain NADH dehydrogenase (Complex I) which is composed of 45 different subunits.

The protein resides in the mitochondrion inner membrane. The catalysed reaction is a ubiquinone + NADH + 5 H(+)(in) = a ubiquinol + NAD(+) + 4 H(+)(out). Core subunit of the mitochondrial membrane respiratory chain NADH dehydrogenase (Complex I) which catalyzes electron transfer from NADH through the respiratory chain, using ubiquinone as an electron acceptor. Part of the enzyme membrane arm which is embedded in the lipid bilayer and involved in proton translocation. The protein is NADH-ubiquinone oxidoreductase chain 4L (MT-ND4L) of Cheirogaleus medius (Fat-tailed dwarf lemur).